The following is a 321-amino-acid chain: Mas-related G-protein coupled receptor member D (321 aa).

Residues 1–8 (MNSTLDSS) lie on the Extracellular side of the membrane. A glycan (N-linked (GlcNAc...) asparagine) is linked at asparagine 2. Residues 9–29 (PAPGLTISPTMDLVTWIYFSV) form a helical membrane-spanning segment. Threonine 30 is a topological domain (cytoplasmic). A helical membrane pass occupies residues 31-51 (FLAMATCVGGMAGNSLVIWLL). Over 52-72 (SCNGMQRSPFCVYVLNLAVAD) the chain is Extracellular. A helical membrane pass occupies residues 73–93 (FLFLFCMASMLSLETGPLLIV). Topologically, residues 94-146 (NISAKIYEGMRRIKYFAYTAGLSLLTAISTQRCLSVLFPIWYKCHRPRHLSSV) are cytoplasmic. Residues 147–167 (VSGALWALAFLMNFLASFFCV) traverse the membrane as a helical segment. Topologically, residues 168-181 (QFWHPNKHQCFKVD) are extracellular. A helical transmembrane segment spans residues 182–202 (IVFNSLILGIFMPVMILTSTI). Topologically, residues 203 to 220 (LFIRVRKNSLMQRRRPRR) are cytoplasmic. A helical membrane pass occupies residues 221 to 241 (LYVVILTSILVFLTCSLPLGI). The Extracellular segment spans residues 242 to 260 (NWFLLYWVDVKRDVRLLYS). Residues 261-281 (CVSRFSSSLSSSANPVIYFLV) form a helical membrane-spanning segment. Topologically, residues 282-321 (GSQKSHRLQESLGAVLGRALRDEPEPEGRETPSTCTNDGV) are cytoplasmic. The span at 302–311 (RDEPEPEGRE) shows a compositional bias: basic and acidic residues. Residues 302 to 321 (RDEPEPEGRETPSTCTNDGV) are disordered. The segment covering 312-321 (TPSTCTNDGV) has biased composition (polar residues).

It belongs to the G-protein coupled receptor 1 family. Mas subfamily. Expressed in a subset of sensory neurons that includes nociceptors. Expressed in the subclass of non-peptidergic sensory neurons that are IB4(+) and VR1(-).

It localises to the cell membrane. In terms of biological role, may regulate nociceptor function and/or development, including the sensation or modulation of pain. Functions as a specific membrane receptor for beta-alanine. The receptor couples with G-protein G(q) and G(i). The chain is Mas-related G-protein coupled receptor member D (Mrgprd) from Mus musculus (Mouse).